A 51-amino-acid polypeptide reads, in one-letter code: MRDKIRLVSSAGTGHFYTTDKNKKTMPEKMEIKKFDPTIRKHVIYKEAKIK.

It belongs to the bacterial ribosomal protein bL33 family.

The chain is Large ribosomal subunit protein bL33 from Colwellia psychrerythraea (strain 34H / ATCC BAA-681) (Vibrio psychroerythus).